A 426-amino-acid chain; its full sequence is Serine--tRNA ligase (426 aa).

The disordered stretch occupies residues 36-66; sequence KRKHLQERTQDLQSQRNTISKEIGQKKAKGE. Over residues 46-55 the composition is skewed to polar residues; sequence DLQSQRNTIS. 233 to 235 serves as a coordination point for L-serine; the sequence is TAE. 264–266 is an ATP binding site; sequence RSE. Glu-287 is a binding site for L-serine. An ATP-binding site is contributed by 351–354; it reads EISS. Ser-387 lines the L-serine pocket.

The protein belongs to the class-II aminoacyl-tRNA synthetase family. Type-1 seryl-tRNA synthetase subfamily. In terms of assembly, homodimer. The tRNA molecule binds across the dimer.

The protein resides in the cytoplasm. It carries out the reaction tRNA(Ser) + L-serine + ATP = L-seryl-tRNA(Ser) + AMP + diphosphate + H(+). It catalyses the reaction tRNA(Sec) + L-serine + ATP = L-seryl-tRNA(Sec) + AMP + diphosphate + H(+). The protein operates within aminoacyl-tRNA biosynthesis; selenocysteinyl-tRNA(Sec) biosynthesis; L-seryl-tRNA(Sec) from L-serine and tRNA(Sec): step 1/1. In terms of biological role, catalyzes the attachment of serine to tRNA(Ser). Is also able to aminoacylate tRNA(Sec) with serine, to form the misacylated tRNA L-seryl-tRNA(Sec), which will be further converted into selenocysteinyl-tRNA(Sec). This is Serine--tRNA ligase from Francisella tularensis subsp. tularensis (strain FSC 198).